Reading from the N-terminus, the 416-residue chain is Serine hydroxymethyltransferase 1 (416 aa).

Residues Leu121 and 125-127 each bind (6S)-5,6,7,8-tetrahydrofolate; that span reads GHL. N6-(pyridoxal phosphate)lysine is present on Lys229. Residues Glu245 and 354–356 each bind (6S)-5,6,7,8-tetrahydrofolate; that span reads SPF.

This sequence belongs to the SHMT family. Homodimer. Requires pyridoxal 5'-phosphate as cofactor.

The protein resides in the cytoplasm. It carries out the reaction (6R)-5,10-methylene-5,6,7,8-tetrahydrofolate + glycine + H2O = (6S)-5,6,7,8-tetrahydrofolate + L-serine. It participates in one-carbon metabolism; tetrahydrofolate interconversion. It functions in the pathway amino-acid biosynthesis; glycine biosynthesis; glycine from L-serine: step 1/1. Functionally, catalyzes the reversible interconversion of serine and glycine with tetrahydrofolate (THF) serving as the one-carbon carrier. This reaction serves as the major source of one-carbon groups required for the biosynthesis of purines, thymidylate, methionine, and other important biomolecules. Also exhibits THF-independent aldolase activity toward beta-hydroxyamino acids, producing glycine and aldehydes, via a retro-aldol mechanism. The protein is Serine hydroxymethyltransferase 1 of Vibrio parahaemolyticus serotype O3:K6 (strain RIMD 2210633).